The primary structure comprises 332 residues: 2-hydroxyacid dehydrogenase homolog 1 (332 aa).

Residues 154–155 (RI), 233–235 (TSR), and Asp-259 each bind NAD(+). Arg-235 is an active-site residue. Glu-264 is a catalytic residue. The active-site Proton donor is the His-296. Residue 296–299 (HQAF) coordinates NAD(+).

This sequence belongs to the D-isomer specific 2-hydroxyacid dehydrogenase family.

The protein localises to the cytoplasm. It localises to the nucleus. The chain is 2-hydroxyacid dehydrogenase homolog 1 from Schizosaccharomyces pombe (strain 972 / ATCC 24843) (Fission yeast).